The primary structure comprises 53 residues: uncharacterized protein (53 aa).

It is found in the plastid. The protein resides in the chloroplast. This is an uncharacterized protein from Guillardia theta (Cryptophyte).